Here is a 690-residue protein sequence, read N- to C-terminus: Glycine--tRNA ligase beta subunit (690 aa).

Belongs to the class-II aminoacyl-tRNA synthetase family. Tetramer of two alpha and two beta subunits.

The protein localises to the cytoplasm. The catalysed reaction is tRNA(Gly) + glycine + ATP = glycyl-tRNA(Gly) + AMP + diphosphate. The chain is Glycine--tRNA ligase beta subunit from Desulfitobacterium hafniense (strain DSM 10664 / DCB-2).